The primary structure comprises 328 residues: Formimidoylglutamase (328 aa).

Mn(2+) is bound by residues His133, Asp159, His161, Asp163, Asp253, and Asp255.

It belongs to the arginase family. Requires Mn(2+) as cofactor.

It carries out the reaction N-formimidoyl-L-glutamate + H2O = formamide + L-glutamate. The protein operates within amino-acid degradation; L-histidine degradation into L-glutamate; L-glutamate from N-formimidoyl-L-glutamate (hydrolase route): step 1/1. Its function is as follows. Catalyzes the conversion of N-formimidoyl-L-glutamate to L-glutamate and formamide. This chain is Formimidoylglutamase, found in Streptococcus pyogenes serotype M5 (strain Manfredo).